A 356-amino-acid chain; its full sequence is Cyanide hydratase (356 aa).

The CN hydrolase domain occupies 8-287; it reads YKAAAVNAEP…EGLLFVDIDL (280 aa). Residue E48 is the Proton acceptor of the active site. K130 is a catalytic residue. Catalysis depends on C165, which acts as the Nucleophile.

It belongs to the carbon-nitrogen hydrolase superfamily. Nitrilase family. As to quaternary structure, oligomer of dimers, forming left-handed helical fibers.

The catalysed reaction is formamide = hydrogen cyanide + H2O. Functionally, catalyzes the hydration of cyanide to formamide. Degradation of cyanide may be important for plant pathogenic fungi in infection of cyanogenic plants. Can also transform some nitriles like 2-cyanopyridine and fumaronitrile. This Aspergillus niger protein is Cyanide hydratase.